Reading from the N-terminus, the 290-residue chain is Protein MGF 110-9L (290 aa).

Helical transmembrane passes span 1-19 (MKVI…VIQS), 128-148 (TENI…IGYI), and 163-183 (LLIF…IIMN). Residues Asn242 and Asn267 are each glycosylated (N-linked (GlcNAc...) asparagine; by host).

This sequence belongs to the asfivirus MGF 110 family.

The protein resides in the host membrane. Functionally, plays a role in virus cell tropism, and may be required for efficient virus replication in macrophages. In Ornithodoros (relapsing fever ticks), this protein is Protein MGF 110-9L.